Reading from the N-terminus, the 343-residue chain is Protein RecA (343 aa).

66 to 73 (GPESSGKT) lines the ATP pocket.

Belongs to the RecA family.

It localises to the cytoplasm. Functionally, can catalyze the hydrolysis of ATP in the presence of single-stranded DNA, the ATP-dependent uptake of single-stranded DNA by duplex DNA, and the ATP-dependent hybridization of homologous single-stranded DNAs. It interacts with LexA causing its activation and leading to its autocatalytic cleavage. The chain is Protein RecA from Rickettsia conorii (strain ATCC VR-613 / Malish 7).